The sequence spans 395 residues: 8-amino-7-oxononanoate synthase (395 aa).

Residue Arg24 coordinates substrate. 111 to 112 contacts pyridoxal 5'-phosphate; that stretch reads GF. His136 is a binding site for substrate. Pyridoxal 5'-phosphate is bound by residues Ser184, 209–212, and 240–243; these read DDAH and TLSK. The residue at position 243 (Lys243) is an N6-(pyridoxal phosphate)lysine. Thr357 provides a ligand contact to substrate.

Belongs to the class-II pyridoxal-phosphate-dependent aminotransferase family. BioF subfamily. In terms of assembly, homodimer. It depends on pyridoxal 5'-phosphate as a cofactor.

The enzyme catalyses 6-carboxyhexanoyl-[ACP] + L-alanine + H(+) = (8S)-8-amino-7-oxononanoate + holo-[ACP] + CO2. Its pathway is cofactor biosynthesis; biotin biosynthesis. Its function is as follows. Catalyzes the decarboxylative condensation of pimeloyl-[acyl-carrier protein] and L-alanine to produce 8-amino-7-oxononanoate (AON), [acyl-carrier protein], and carbon dioxide. The chain is 8-amino-7-oxononanoate synthase from Alkaliphilus metalliredigens (strain QYMF).